The chain runs to 273 residues: Large ribosomal subunit protein uL2c (273 aa).

Residues 1 to 31 (MAIHLSKTSSPSTRNGAVNSQVKSNSRNRLI) are compositionally biased toward polar residues. Disordered regions lie at residues 1-53 (MAIH…GHRG) and 222-273 (MNPV…RRSK).

It belongs to the universal ribosomal protein uL2 family. As to quaternary structure, part of the 50S ribosomal subunit.

It localises to the plastid. The protein localises to the chloroplast. In Pisum sativum (Garden pea), this protein is Large ribosomal subunit protein uL2c (rpl2).